Here is a 137-residue protein sequence, read N- to C-terminus: MIWKRHLTLDELNATSDNTMVAHLGIVYTRLGDDVLEAEMPVDIRTHQPFGLLHGGASAALAETLGSMAGFMMTRDGQCVVGTELNATHHRPVSEGKVRGVCQPLHLGRQNQSWEIVVFDEQGRRCCTCRLGTAVLG.

E63 functions as the Nucleophile or proton acceptor in the catalytic mechanism.

Belongs to the thioesterase PaaI family. As to quaternary structure, homotetramer. Dimer of dimers. Interacts specifically with the aryl carrier protein (ArCP) domain of EntB.

The protein resides in the cytoplasm. The protein operates within siderophore biosynthesis; enterobactin biosynthesis. In terms of biological role, required for optimal enterobactin synthesis. Acts as a proofreading enzyme that prevents EntB misacylation by hydrolyzing the thioester bound existing between EntB and wrongly charged molecules. This Escherichia coli O157:H7 (strain EC4115 / EHEC) protein is Proofreading thioesterase EntH.